Reading from the N-terminus, the 211-residue chain is Xanthine phosphoribosyltransferase (211 aa).

Leu-31 and Asn-38 together coordinate xanthine. 138 to 142 contributes to the 5-phospho-alpha-D-ribose 1-diphosphate binding site; sequence ANGRT. Position 166 (Lys-166) interacts with xanthine.

Belongs to the purine/pyrimidine phosphoribosyltransferase family. Xpt subfamily. Homodimer.

The protein localises to the cytoplasm. It carries out the reaction XMP + diphosphate = xanthine + 5-phospho-alpha-D-ribose 1-diphosphate. It functions in the pathway purine metabolism; XMP biosynthesis via salvage pathway; XMP from xanthine: step 1/1. Functionally, converts the preformed base xanthine, a product of nucleic acid breakdown, to xanthosine 5'-monophosphate (XMP), so it can be reused for RNA or DNA synthesis. This chain is Xanthine phosphoribosyltransferase, found in Chloroflexus aurantiacus (strain ATCC 29364 / DSM 637 / Y-400-fl).